Consider the following 588-residue polypeptide: Aspartate--tRNA ligase (588 aa).

Glutamate 177 is an L-aspartate binding site. The aspartate stretch occupies residues 201-204 (QLFK). Arginine 223 is an L-aspartate binding site. ATP is bound by residues 223 to 225 (RDE) and glutamine 232. Histidine 451 lines the L-aspartate pocket. Glutamate 485 provides a ligand contact to ATP. Residue arginine 492 coordinates L-aspartate. An ATP-binding site is contributed by 537-540 (GLDR).

It belongs to the class-II aminoacyl-tRNA synthetase family. Type 1 subfamily. In terms of assembly, homodimer.

Its subcellular location is the cytoplasm. The catalysed reaction is tRNA(Asp) + L-aspartate + ATP = L-aspartyl-tRNA(Asp) + AMP + diphosphate. Catalyzes the attachment of L-aspartate to tRNA(Asp) in a two-step reaction: L-aspartate is first activated by ATP to form Asp-AMP and then transferred to the acceptor end of tRNA(Asp). The chain is Aspartate--tRNA ligase from Staphylococcus aureus (strain NCTC 8325 / PS 47).